The following is a 152-amino-acid chain: Transcriptional repressor NrdR (152 aa).

Residues 3-34 fold into a zinc finger; it reads CPFCNHGELKVIDSRNSPEANAIKRRRECLRC. In terms of domain architecture, ATP-cone spans 48–138; that stretch reads IQVLKRDGRY…VYRRFRDVGE (91 aa).

This sequence belongs to the NrdR family. Requires Zn(2+) as cofactor.

Its function is as follows. Negatively regulates transcription of bacterial ribonucleotide reductase nrd genes and operons by binding to NrdR-boxes. The protein is Transcriptional repressor NrdR of Chlamydia muridarum (strain MoPn / Nigg).